The sequence spans 98 residues: Co-chaperonin GroES (98 aa).

It belongs to the GroES chaperonin family. In terms of assembly, heptamer of 7 subunits arranged in a ring. Interacts with the chaperonin GroEL.

It localises to the cytoplasm. Functionally, together with the chaperonin GroEL, plays an essential role in assisting protein folding. The GroEL-GroES system forms a nano-cage that allows encapsulation of the non-native substrate proteins and provides a physical environment optimized to promote and accelerate protein folding. GroES binds to the apical surface of the GroEL ring, thereby capping the opening of the GroEL channel. This is Co-chaperonin GroES from Paenarthrobacter aurescens (strain TC1).